The sequence spans 616 residues: Chaperone protein DnaK (616 aa).

Thr-174 carries the post-translational modification Phosphothreonine; by autocatalysis. Residues 576 to 616 (QASAPGAGPEGASGGFGGENKKDDNVVDADYTVIDDDKKKT) form a disordered region. Residues 583 to 593 (GPEGASGGFGG) show a composition bias toward gly residues.

This sequence belongs to the heat shock protein 70 family.

Functionally, acts as a chaperone. The protein is Chaperone protein DnaK of Heliobacterium modesticaldum (strain ATCC 51547 / Ice1).